Here is a 343-residue protein sequence, read N- to C-terminus: Pseudaminic acid synthase (343 aa).

Residues 287-343 (SLYASKDIKKGEIFSEENVKSVRPSFGLHPKFYQELLGKKASKDIEFGDALKESDFR) enclose the AFP-like domain.

This sequence belongs to the pseudaminic acid synthase family. A divalent metal cation is required as a cofactor.

The enzyme catalyses 2,4-diacetamido-2,4,6-trideoxy-beta-L-altrose + phosphoenolpyruvate + H2O = pseudaminate + phosphate. Functionally, catalyzes the fifth step in the biosynthesis of pseudaminic acid, a sialic-acid-like sugar that is used to modify flagellin. Catalyzes the condensation of phosphoenolpyruvate with 2,4-diacetamido-2,4,6-trideoxy-beta-l-altropyranose, forming pseudaminic acid. The polypeptide is Pseudaminic acid synthase (pseI) (Campylobacter jejuni subsp. jejuni serotype O:23/36 (strain 81-176)).